A 588-amino-acid chain; its full sequence is Ankyrin repeat protein OPG003 (588 aa).

5 ANK repeats span residues 69–101 (CGNS…NFDS), 175–223 (DGLT…NINA), 227–259 (IGNT…DTRI), 300–336 (EGQH…QKDE), and 339–368 (NTMT…DINL). The PRANC/F-box-like stretch occupies residues 557 to 574 (LPPEIMRNIITKLSDYHL).

It belongs to the orthopoxvirus OPG003 family.

Its function is as follows. May be involved in virus-host protein interaction through the ankyrin repeats and PRANC regions. This is Ankyrin repeat protein OPG003 (OPG003) from Cynomys gunnisoni (Gunnison's prairie dog).